The chain runs to 406 residues: Solanesyl diphosphate synthase 1, chloroplastic (406 aa).

The transit peptide at 1-71 directs the protein to the chloroplast; the sequence is MMTSCRNIDL…NGIGQSQTVS (71 aa). Isopentenyl diphosphate is bound by residues Lys126, Arg129, and His164. Mg(2+) contacts are provided by Asp171 and Asp175. Arg180 is an an all-trans-polyprenyl diphosphate binding site. An isopentenyl diphosphate-binding site is contributed by Arg181. Positions 257, 258, 295, and 312 each coordinate an all-trans-polyprenyl diphosphate.

Belongs to the FPP/GGPP synthase family. In terms of assembly, homodimer. Interacts with FBN5. Requires Mg(2+) as cofactor. As to expression, higher expression in leaves than in roots.

Its subcellular location is the plastid. The protein localises to the chloroplast. The enzyme catalyses 5 isopentenyl diphosphate + (2E,6E,10E)-geranylgeranyl diphosphate = all-trans-nonaprenyl diphosphate + 5 diphosphate. The catalysed reaction is isopentenyl diphosphate + (2E,6E)-farnesyl diphosphate = (2E,6E,10E)-geranylgeranyl diphosphate + diphosphate. Involved in providing solanesyl diphosphate for plastoquinone-9 (PQ-9) formation in plastids. Catalyzes the elongation of the prenyl side chain of PQ-9 in plastids. Contributes to the biosynthesis of plastochromanol-8 (PC-8) in plastids. Does not contribute to the synthesis of tocopherol or ubiquinone. PQ-9 and PC-8 are lipophilic antioxidants that act as protectant against photooxidative stress under high light stress conditions. Prefers geranylgeranyl diphosphate to farnesyl diphosphate as substrate. No activity with geranyl diphosphate or dimethylallyl diphosphate as substrate. In Arabidopsis thaliana (Mouse-ear cress), this protein is Solanesyl diphosphate synthase 1, chloroplastic.